The primary structure comprises 450 residues: UDP-N-acetylmuramoylalanine--D-glutamate ligase (450 aa).

ATP is bound at residue 115 to 121 (GTNGKTT).

The protein belongs to the MurCDEF family.

Its subcellular location is the cytoplasm. It carries out the reaction UDP-N-acetyl-alpha-D-muramoyl-L-alanine + D-glutamate + ATP = UDP-N-acetyl-alpha-D-muramoyl-L-alanyl-D-glutamate + ADP + phosphate + H(+). Its pathway is cell wall biogenesis; peptidoglycan biosynthesis. In terms of biological role, cell wall formation. Catalyzes the addition of glutamate to the nucleotide precursor UDP-N-acetylmuramoyl-L-alanine (UMA). This chain is UDP-N-acetylmuramoylalanine--D-glutamate ligase, found in Desulfatibacillum aliphaticivorans.